The chain runs to 345 residues: MSTNLLESTPPFTQLRTGVLQKYTPGLLLCSIAVLIAMIVNHFFSGVSPLIVAIILGIILTNLIQLPASTSPGITLASKKLLRLGIVFLGLQLVFSDILSLGFPMLAVIVCIVAGGIFGTILMGHLLRMKPTQVLLIACGFSICGAAAVAGVEGVTDSEEEEVVTAVALVVIFGTLMIPFIPFATKVLGLSPEIGGMWAGGSIHEIAQVVAAGGVIGGGALGVAVVVKLARVLLLAPIAAILSFRQRRQGYTSPDGKRPPVVPLFILGFLAMVVLRSTVALPDEVIAAGGFLQTALLSAAMFGLGCGVKIQNLIHVGVKPFILAFGSTTLVTSIALAGTLLTHLG.

10 helical membrane passes run 15–37, 44–66, 81–103, 105–124, 134–156, 163–185, 205–227, 261–280, 285–307, and 320–342; these read LRTG…VLIA, FSGV…LIQL, LLRL…SLGF, MLAV…ILMG, VLLI…EGVT, VVTA…PFAT, EIAQ…AVVV, VVPL…STVA, VIAA…LGCG, and PFIL…TLLT.

Belongs to the UPF0324 family.

It is found in the cell membrane. The sequence is that of UPF0324 membrane protein Cgl0015/cg0018 from Corynebacterium glutamicum (strain ATCC 13032 / DSM 20300 / JCM 1318 / BCRC 11384 / CCUG 27702 / LMG 3730 / NBRC 12168 / NCIMB 10025 / NRRL B-2784 / 534).